Consider the following 172-residue polypeptide: Envelope protein UL45 (172 aa).

Over 1-27 the chain is Intravirion; it reads MPLRASEHAYRPLGPGTPPMRARLPAA. The helical; Signal-anchor for type II membrane protein transmembrane segment at 28 to 48 threads the bilayer; that stretch reads AWVGVGTIIGGVVIIAALVLV. Over 49-172 the chain is Virion surface; the sequence is PSRASWALSP…TSTRNALGLP (124 aa).

It belongs to the herpesviridae HHV-1 UL45 family.

It localises to the virion membrane. Important virulence factor of HSV neurotropism. Seems to be required for glycoprotein B-induced fusion. Dispensable for growth in vitro. The chain is Envelope protein UL45 from Human herpesvirus 1 (strain KOS) (HHV-1).